The sequence spans 302 residues: tRNA-cytidine(32) 2-sulfurtransferase (302 aa).

A PP-loop motif motif is present at residues 45 to 50 (SGGKDS). The [4Fe-4S] cluster site is built by Cys120, Cys123, and Cys211.

It belongs to the TtcA family. As to quaternary structure, homodimer. Mg(2+) serves as cofactor. The cofactor is [4Fe-4S] cluster.

The protein resides in the cytoplasm. The enzyme catalyses cytidine(32) in tRNA + S-sulfanyl-L-cysteinyl-[cysteine desulfurase] + AH2 + ATP = 2-thiocytidine(32) in tRNA + L-cysteinyl-[cysteine desulfurase] + A + AMP + diphosphate + H(+). Its pathway is tRNA modification. In terms of biological role, catalyzes the ATP-dependent 2-thiolation of cytidine in position 32 of tRNA, to form 2-thiocytidine (s(2)C32). The sulfur atoms are provided by the cysteine/cysteine desulfurase (IscS) system. This Cellvibrio japonicus (strain Ueda107) (Pseudomonas fluorescens subsp. cellulosa) protein is tRNA-cytidine(32) 2-sulfurtransferase.